Here is a 55-residue protein sequence, read N- to C-terminus: Large ribosomal subunit protein bL33 (55 aa).

This sequence belongs to the bacterial ribosomal protein bL33 family.

The chain is Large ribosomal subunit protein bL33 from Orientia tsutsugamushi (strain Boryong) (Rickettsia tsutsugamushi).